Here is a 582-residue protein sequence, read N- to C-terminus: 5-aminolevulinate synthase, erythroid-specific, mitochondrial (582 aa).

The transit peptide at 1–44 (MLLQRCPVLIRSPTAILGKMIKTHQFLIGIGRCPILATQGTTCS) directs the protein to the mitochondrion. Arginine 158 is a succinyl-CoA binding site. Cysteine 253 and phenylalanine 254 together coordinate pyridoxal 5'-phosphate. Positions 275 and 294 each coordinate succinyl-CoA. Pyridoxal 5'-phosphate is bound by residues serine 327, histidine 355, and threonine 383. Lysine 386 is a catalytic residue. The residue at position 386 (lysine 386) is an N6-(pyridoxal phosphate)lysine. Residues threonine 415 and threonine 416 each contribute to the pyridoxal 5'-phosphate site. Threonine 503 contributes to the succinyl-CoA binding site.

It belongs to the class-II pyridoxal-phosphate-dependent aminotransferase family. Homodimer. The cofactor is pyridoxal 5'-phosphate.

The protein resides in the mitochondrion inner membrane. The catalysed reaction is succinyl-CoA + glycine + H(+) = 5-aminolevulinate + CO2 + CoA. It functions in the pathway porphyrin-containing compound metabolism; protoporphyrin-IX biosynthesis; 5-aminolevulinate from glycine: step 1/1. Functionally, catalyzes the pyridoxal 5'-phosphate (PLP)-dependent condensation of succinyl-CoA and glycine to form aminolevulinic acid (ALA), with CoA and CO2 as by-products. Contributes significantly to heme formation during erythropoiesis. The protein is 5-aminolevulinate synthase, erythroid-specific, mitochondrial (ALAS2) of Delphinapterus leucas (Beluga whale).